We begin with the raw amino-acid sequence, 191 residues long: MASAFEMNRLAFIIFVYVIAAIPFGRCISACFGVDICTRGSGNIGATNMTRVMGLGFGSVVFMLDFLKAAAPVFLAVQCCSDVFASTVGFVAVFAHVFSVYMAFKGGKGVAPMMGVYFVLVLPVFIVAVCTWGIFFVLFRQPFISSLIACFIGAVYSYALLELYVFLPILAGTVLIFIRHTSNVREFLQAR.

Transmembrane regions (helical) follow at residues 10 to 30 (LAFI…CISA), 57 to 77 (FGSV…FLAV), 84 to 104 (FAST…YMAF), 118 to 138 (FVLV…FFVL), and 158 to 178 (YALL…LIFI).

This sequence belongs to the PlsY family. Probably interacts with PlsX.

The protein resides in the cell inner membrane. It carries out the reaction an acyl phosphate + sn-glycerol 3-phosphate = a 1-acyl-sn-glycero-3-phosphate + phosphate. The protein operates within lipid metabolism; phospholipid metabolism. In terms of biological role, catalyzes the transfer of an acyl group from acyl-phosphate (acyl-PO(4)) to glycerol-3-phosphate (G3P) to form lysophosphatidic acid (LPA). This enzyme utilizes acyl-phosphate as fatty acyl donor, but not acyl-CoA or acyl-ACP. This chain is Glycerol-3-phosphate acyltransferase, found in Neorickettsia sennetsu (strain ATCC VR-367 / Miyayama) (Ehrlichia sennetsu).